A 196-amino-acid chain; its full sequence is Holliday junction branch migration complex subunit RuvA (196 aa).

Residues 1–63 form a domain I region; sequence MINKIYGKVI…ENELKLFGFL (63 aa). The segment at 64–139 is domain II; the sequence is NSDERETFKS…KLLINNELES (76 aa). Position 139 (serine 139) is a region of interest, flexible linker. Residues 139-196 are domain III; it reads SSLFRFKELEESIVSMGFDRKIVNSKLKEAFNLVEFSNLKDSEKEQFLFKEVLKRMSN.

It belongs to the RuvA family. As to quaternary structure, homotetramer. Forms an RuvA(8)-RuvB(12)-Holliday junction (HJ) complex. HJ DNA is sandwiched between 2 RuvA tetramers; dsDNA enters through RuvA and exits via RuvB. An RuvB hexamer assembles on each DNA strand where it exits the tetramer. Each RuvB hexamer is contacted by two RuvA subunits (via domain III) on 2 adjacent RuvB subunits; this complex drives branch migration. In the full resolvosome a probable DNA-RuvA(4)-RuvB(12)-RuvC(2) complex forms which resolves the HJ.

It localises to the cytoplasm. The RuvA-RuvB-RuvC complex processes Holliday junction (HJ) DNA during genetic recombination and DNA repair, while the RuvA-RuvB complex plays an important role in the rescue of blocked DNA replication forks via replication fork reversal (RFR). RuvA specifically binds to HJ cruciform DNA, conferring on it an open structure. The RuvB hexamer acts as an ATP-dependent pump, pulling dsDNA into and through the RuvAB complex. HJ branch migration allows RuvC to scan DNA until it finds its consensus sequence, where it cleaves and resolves the cruciform DNA. The chain is Holliday junction branch migration complex subunit RuvA from Borreliella afzelii (strain PKo) (Borrelia afzelii).